Consider the following 266-residue polypeptide: Phosphonates import ATP-binding protein PhnC (266 aa).

The ABC transporter domain maps to 2 to 246; it reads IEIKNVSKTY…KFAEIYGRPI (245 aa). 35-42 is a binding site for ATP; that stretch reads GLSGAGKS.

This sequence belongs to the ABC transporter superfamily. Phosphonates importer (TC 3.A.1.9.1) family. In terms of assembly, the complex is composed of two ATP-binding proteins (PhnC), two transmembrane proteins (PhnE) and a solute-binding protein (PhnD).

The protein resides in the cell membrane. The catalysed reaction is phosphonate(out) + ATP + H2O = phosphonate(in) + ADP + phosphate + H(+). Functionally, part of the ABC transporter complex PhnCDE involved in phosphonates import. Responsible for energy coupling to the transport system. In Shouchella clausii (strain KSM-K16) (Alkalihalobacillus clausii), this protein is Phosphonates import ATP-binding protein PhnC.